Reading from the N-terminus, the 296-residue chain is L-fucono-1,5-lactonase (296 aa).

It belongs to the metallo-dependent hydrolases superfamily. In terms of assembly, monomer. The cofactor is Does not require a divalent metal for activity. The purified enzyme contains Zn(2+), but the addition of chelators does not diminish the catalytic activity of the enzyme, indicating that it does not require a divalent cation for substrate turnover..

The catalysed reaction is L-fucono-1,5-lactone + H2O = L-fuconate + H(+). It carries out the reaction L-fucono-1,4-lactone + H2O = L-fuconate + H(+). It catalyses the reaction D-arabinono-1,4-lactone + H2O = D-arabinonate + H(+). The enzyme catalyses L-xylono-1,4-lactone + H2O = L-xylonate + H(+). The catalysed reaction is L-galactono-1,4-lactone + H2O = L-galactonate + H(+). It participates in carbohydrate degradation; L-fucose degradation. Its function is as follows. L-fucono-1,5-lactonase involved in an L-fucose degradation pathway. Catalyzes the hydrolysis of L-fucono-1,5-lactone to L-fuconate. L-fucono-1,5-lactone is the best substrate, but the enzyme can also hydrolyze L-fucono-1,4-lactone, L-galactono-1,4-lactone D-arabinono-1,4-lactone and L-xylono-1,4-lactone. The polypeptide is L-fucono-1,5-lactonase (Burkholderia multivorans (strain ATCC 17616 / 249)).